Reading from the N-terminus, the 513-residue chain is Protein indeterminate-domain 11 (513 aa).

A disordered region spans residues 1–84 (MMNKDMLLHQ…QPGNPDPESE (84 aa)). Polar residues predominate over residues 10 to 45 (QHQQPQQDENMSNLTSASGDQASVSSGNITEASGSN). The segment covering 51–60 (QQQQEQQQQQ) has biased composition (low complexity). S89 is modified (phosphoserine). 2 C2H2-type zinc fingers span residues 99–121 (FVCEICNKGFQRDQNLQLHRRGH) and 141–171 (YVCPEASCVHHDPSRALGDLTGIKKHFCRKH). Residues 163-170 (IKKHFCRK) carry the Nuclear localization signal motif. The C2H2-type 2; degenerate zinc finger occupies 176–199 (WKCDKCSKKYAVQSDCKAHSKTCG). Residues C178, C181, H194, C198, C205, C207, H220, and C224 each contribute to the Zn(2+) site. The segment at 203–226 (YRCDCGTLFSRRDSFITHRAFCEA) adopts a CCHC-type 2; atypical zinc-finger fold. The interval 213–225 (RRDSFITHRAFCE) is SHR-binding. Disordered stretches follow at residues 255-280 (ASHPHHHHQTQPTINVSSSSSSSHNH) and 334-358 (PQPHALTSSNPNPSNGGGGGGSLFS). Residues 264-280 (TQPTINVSSSSSSSHNH) show a composition bias toward low complexity.

The protein resides in the nucleus. Probable transcription factor. This chain is Protein indeterminate-domain 11, found in Arabidopsis thaliana (Mouse-ear cress).